A 380-amino-acid polypeptide reads, in one-letter code: Cytochrome b (380 aa).

4 helical membrane passes run 34-54 (FGSLLGICLMTQILTGLLLAM), 78-99 (WLIRNLHANGASFFFICIYFHI), 114-134 (WNTGVILLLTLMATAFVGYVL), and 179-199 (FFALHFLLPFMIAGLTLIHLT). Heme b-binding residues include histidine 84 and histidine 98. Residues histidine 183 and histidine 197 each contribute to the heme b site. Histidine 202 serves as a coordination point for a ubiquinone. 4 helical membrane passes run 227 to 247 (LKDILGFTLMFLPLTTLALFS), 289 to 309 (LGGVLALAASVLILFLIPFLH), 321 to 341 (ISQLLFWILVANLLILTWVGS), and 348 to 368 (FIIIGQLASVTYFTILLVLFP).

Belongs to the cytochrome b family. In terms of assembly, the cytochrome bc1 complex contains 11 subunits: 3 respiratory subunits (MT-CYB, CYC1 and UQCRFS1), 2 core proteins (UQCRC1 and UQCRC2) and 6 low-molecular weight proteins (UQCRH/QCR6, UQCRB/QCR7, UQCRQ/QCR8, UQCR10/QCR9, UQCR11/QCR10 and a cleavage product of UQCRFS1). This cytochrome bc1 complex then forms a dimer. Heme b is required as a cofactor.

The protein resides in the mitochondrion inner membrane. Component of the ubiquinol-cytochrome c reductase complex (complex III or cytochrome b-c1 complex) that is part of the mitochondrial respiratory chain. The b-c1 complex mediates electron transfer from ubiquinol to cytochrome c. Contributes to the generation of a proton gradient across the mitochondrial membrane that is then used for ATP synthesis. The protein is Cytochrome b (MT-CYB) of Pachyptila salvini (Salvin's prion).